A 445-amino-acid chain; its full sequence is 3-phosphoshikimate 1-carboxyvinyltransferase (445 aa).

3-phosphoshikimate-binding residues include Lys-21, Ser-22, and Arg-26. Phosphoenolpyruvate is bound at residue Lys-21. Residues Gly-92 and Arg-120 each contribute to the phosphoenolpyruvate site. 3-phosphoshikimate is bound by residues Ser-165, Gln-166, Asp-307, and Lys-334. Gln-166 serves as a coordination point for phosphoenolpyruvate. Catalysis depends on Asp-307, which acts as the Proton acceptor. Phosphoenolpyruvate contacts are provided by Arg-338, Arg-379, and Lys-405.

It belongs to the EPSP synthase family. As to quaternary structure, monomer.

The protein resides in the cytoplasm. It carries out the reaction 3-phosphoshikimate + phosphoenolpyruvate = 5-O-(1-carboxyvinyl)-3-phosphoshikimate + phosphate. It participates in metabolic intermediate biosynthesis; chorismate biosynthesis; chorismate from D-erythrose 4-phosphate and phosphoenolpyruvate: step 6/7. In terms of biological role, catalyzes the transfer of the enolpyruvyl moiety of phosphoenolpyruvate (PEP) to the 5-hydroxyl of shikimate-3-phosphate (S3P) to produce enolpyruvyl shikimate-3-phosphate and inorganic phosphate. This is 3-phosphoshikimate 1-carboxyvinyltransferase from Chlamydia abortus (strain DSM 27085 / S26/3) (Chlamydophila abortus).